We begin with the raw amino-acid sequence, 583 residues long: Atlastin-2 (583 aa).

Residues M1–E44 are disordered. Residues M1–P60 are N-terminal hypervariable region (HVR). Topologically, residues M1–A476 are cytoplasmic. At S24 the chain carries Phosphoserine. Positions D91–N336 constitute a GB1/RHD3-type G domain. 9 residues coordinate GDP: R104, K105, G106, K107, S108, F109, Q175, R244, and D245. GTP-binding residues include R104, K105, G106, K107, S108, and F109. S108 provides a ligand contact to Mg(2+). 2 residues coordinate GTP: R244 and D245. Residues L256–I284 are a coiled coil. Position 270 is an N6-methyllysine (K270). 2 residues coordinate GDP: V303 and N306. V303 contacts GTP. Residues M374–G465 form a 3HB (three-helix bundle) domain region. Residues K466–T474 are linker. Residues T477–L497 traverse the membrane as a helical segment. At N498 to S499 the chain is on the lumenal side. The chain crosses the membrane as a helical span at residues I500–Y520. At V521 to D583 the chain is on the cytoplasmic side. The autoinhibitory domain stretch occupies residues K547–D583.

It belongs to the TRAFAC class dynamin-like GTPase superfamily. GB1/RHD3 GTPase family. GB1 subfamily. In terms of assembly, monomeric and homodimeric. The homodimer, transiently formed by two molecules on opposing membranes, is the active form mediating ER membrane fusion. Interacts with REEP5 and RTN3; these proteins are involved in endoplasmic reticulum tubular network organization. Interacts with ZFYVE27; both proteins are involved in endoplasmic reticulum tubular network organization. As to expression, expressed in peripheral tissues (at protein level).

The protein resides in the endoplasmic reticulum membrane. The catalysed reaction is GTP + H2O = GDP + phosphate + H(+). With respect to regulation, with its alternative C-terminus disrupting the autoinhibitory domain, this brain-specific isoform is probably more active at fusing ER membranes. Functionally, atlastin-2 (ATL2) is a membrane-anchored GTPase that mediates the GTP-dependent fusion of endoplasmic reticulum (ER) membranes, maintaining the continuous ER network. It facilitates the formation of three-way junctions where ER tubules intersect. Two atlastin-2 on neighboring ER tubules bind GTP and form loose homodimers through the GB1/RHD3-type G domains and 3HB regions. Upon GTP hydrolysis, the 3HB regions tighten, pulling the membranes together to drive their fusion. After fusion, the homodimer disassembles upon release of inorganic phosphate (Pi). Subsequently, GDP dissociates, resetting the monomers to a conformation ready for a new fusion cycle. This chain is Atlastin-2, found in Homo sapiens (Human).